Consider the following 1692-residue polypeptide: Tyrosine-protein phosphatase non-receptor type 23 (1692 aa).

In terms of domain architecture, BRO1 spans 8 to 394; it reads PMIWLDLKEA…AKIEDKNEVL (387 aa). 2 TPR repeats span residues 250–283 and 374–407; these read AVAH…LNEA and EEKA…DPET. Positions 552 to 639 form a coiled coil; sequence KAVLQNLKRI…RALTEANVQY (88 aa). 3 disordered regions span residues 711–788, 884–923, and 944–1199; these read DREL…PATH, DSVQ…PQPQ, and TYSI…LLQP. Position 744 is a phosphothreonine (Thr-744). A his region spans residues 773 to 1186; it reads HFSPGPFPSS…SSSPESQHGG (414 aa). Residues 774-785 show a composition bias toward low complexity; the sequence is FSPGPFPSSTGP. Positions 884–894 are enriched in polar residues; sequence DSVQAPISSHT. Pro residues predominate over residues 897 to 923; sequence RPNPTPALPQPCFPVPQPVPQSVPQPQ. Arg-974 bears the Omega-N-methylarginine mark. Repeat copies occupy residues 977-978, 979-980, 981-982, 983-984, 985-986, 987-988, 989-990, 991-992, 993-994, 995-996, 997-998, 999-1000, 1001-1002, 1003-1004, 1005-1006, 1007-1008, 1009-1010, 1011-1012, 1013-1014, 1015-1016, and 1017-1018. A 21 X 2 AA approximate tandem repeats of P-Q region spans residues 977 to 1018; that stretch reads PQAQAQPQPQPQPQPQPQPQPQPQPQPQSQSQPQPQPQPQPQ. The segment covering 984-1002 has biased composition (pro residues); it reads QPQPQPQPQPQPQPQPQPQ. Pro residues-rich tracts occupy residues 1093–1102 and 1127–1165; these read FPSPGPPHPH and GPPP…PPPC. Phosphoserine occurs at positions 1178 and 1179. Residue Thr-1187 is modified to Phosphothreonine. The region spanning 1248–1508 is the Tyrosine-protein phosphatase domain; it reads DAIWRELQEA…KFCHEALVRH (261 aa). Cys-1448 acts as the Phosphocysteine intermediate in catalysis. Positions 1574-1638 are disordered; the sequence is ASLPGLVEPP…PSSSLELLAS (65 aa). Positions 1598–1612 are enriched in pro residues; that stretch reads SSSPPPLSSPLPEAP. Positions 1620–1638 are enriched in low complexity; the sequence is VPEAPSLGPPSSSLELLAS. Residue Arg-1671 is modified to Omega-N-methylarginine.

It belongs to the protein-tyrosine phosphatase family. Non-receptor class subfamily. Interacts with GRAP2 and GRB2. Interacts with UBAP1 and CHMP4B.

The protein resides in the nucleus. Its subcellular location is the cytoplasm. The protein localises to the cytoplasmic vesicle. It localises to the endosome. It is found in the cytoskeleton. The protein resides in the cilium basal body. It carries out the reaction O-phospho-L-tyrosyl-[protein] + H2O = L-tyrosyl-[protein] + phosphate. In terms of biological role, plays a role in sorting of endocytic ubiquitinated cargos into multivesicular bodies (MVBs) via its interaction with the ESCRT-I complex (endosomal sorting complex required for transport I), and possibly also other ESCRT complexes. May act as a negative regulator of Ras-mediated mitogenic activity. Plays a role in ciliogenesis. The sequence is that of Tyrosine-protein phosphatase non-receptor type 23 (Ptpn23) from Mus musculus (Mouse).